The chain runs to 611 residues: Virulence metalloprotease (611 aa).

An N-terminal signal peptide occupies residues 1 to 25 (MKKVQRQMKWLFLAASISAALPVSA). Positions 26-199 (AKMVQVDDPS…VLQTWEGLNH (174 aa)) are excised as a propeptide. Position 346 (histidine 346) interacts with Zn(2+). Glutamate 347 is an active-site residue. The Zn(2+) site is built by histidine 350 and glutamate 370. The active-site Proton donor is the histidine 429.

The protein belongs to the peptidase M4 family. Requires Ca(2+) as cofactor. Zn(2+) serves as cofactor. In terms of processing, seems to be more extensively processed.

The protein resides in the secreted. Extracellular zinc metalloprotease involved in the virulence mechanism of V.anguillarum. In Vibrio anguillarum (Listonella anguillarum), this protein is Virulence metalloprotease (empA).